The sequence spans 66 residues: Sodium channel alpha-toxin Acra8 (66 aa).

Positions 2 to 64 (RDGYIVDDKN…VPIKEKGRCN (63 aa)) constitute an LCN-type CS-alpha/beta domain. Disulfide bonds link C12-C63, C16-C36, C22-C46, and C26-C48. N64 bears the Asparagine amide mark. The propeptide occupies 65-66 (GR).

It belongs to the long (4 C-C) scorpion toxin superfamily. Sodium channel inhibitor family. Alpha subfamily. As to expression, expressed by the venom gland.

It localises to the secreted. Its function is as follows. Alpha toxins bind voltage-independently at site-3 of sodium channels (Nav) and inhibit the inactivation of the activated channels, thereby blocking neuronal transmission. This is Sodium channel alpha-toxin Acra8 from Androctonus crassicauda (Arabian fat-tailed scorpion).